The following is a 155-amino-acid chain: SsrA-binding protein (155 aa).

Belongs to the SmpB family.

It localises to the cytoplasm. Its function is as follows. Required for rescue of stalled ribosomes mediated by trans-translation. Binds to transfer-messenger RNA (tmRNA), required for stable association of tmRNA with ribosomes. tmRNA and SmpB together mimic tRNA shape, replacing the anticodon stem-loop with SmpB. tmRNA is encoded by the ssrA gene; the 2 termini fold to resemble tRNA(Ala) and it encodes a 'tag peptide', a short internal open reading frame. During trans-translation Ala-aminoacylated tmRNA acts like a tRNA, entering the A-site of stalled ribosomes, displacing the stalled mRNA. The ribosome then switches to translate the ORF on the tmRNA; the nascent peptide is terminated with the 'tag peptide' encoded by the tmRNA and targeted for degradation. The ribosome is freed to recommence translation, which seems to be the essential function of trans-translation. This chain is SsrA-binding protein, found in Lactococcus lactis subsp. cremoris (strain MG1363).